The sequence spans 257 residues: UPF0246 protein RSKD131_2757 (257 aa).

It belongs to the UPF0246 family.

This chain is UPF0246 protein RSKD131_2757, found in Cereibacter sphaeroides (strain KD131 / KCTC 12085) (Rhodobacter sphaeroides).